We begin with the raw amino-acid sequence, 117 residues long: Prefoldin subunit beta (117 aa).

It belongs to the prefoldin subunit beta family. In terms of assembly, heterohexamer of two alpha and four beta subunits.

It localises to the cytoplasm. Molecular chaperone capable of stabilizing a range of proteins. Seems to fulfill an ATP-independent, HSP70-like function in archaeal de novo protein folding. The polypeptide is Prefoldin subunit beta (Methanosarcina mazei (strain ATCC BAA-159 / DSM 3647 / Goe1 / Go1 / JCM 11833 / OCM 88) (Methanosarcina frisia)).